A 76-amino-acid chain; its full sequence is Sec-independent protein translocase protein TatA (76 aa).

A helical membrane pass occupies residues 1-21 (MGGLSIWHWLIVLLIVALVFG). A disordered region spans residues 40–76 (KDGMKEGETPADAQQLPRTGTVDVNAKETTRSDSNKA). The span at 64-76 (NAKETTRSDSNKA) shows a compositional bias: basic and acidic residues.

Belongs to the TatA/E family. The Tat system comprises two distinct complexes: a TatABC complex, containing multiple copies of TatA, TatB and TatC subunits, and a separate TatA complex, containing only TatA subunits. Substrates initially bind to the TatABC complex, which probably triggers association of the separate TatA complex to form the active translocon.

It is found in the cell inner membrane. Part of the twin-arginine translocation (Tat) system that transports large folded proteins containing a characteristic twin-arginine motif in their signal peptide across membranes. TatA could form the protein-conducting channel of the Tat system. This chain is Sec-independent protein translocase protein TatA, found in Burkholderia ambifaria (strain MC40-6).